Consider the following 240-residue polypeptide: UDP-2,3-diacylglucosamine hydrolase (240 aa).

Residues Asp-8, His-10, Asp-41, Asn-79, and His-114 each coordinate Mn(2+). Position 79–80 (79–80 (NR)) interacts with substrate. 5 residues coordinate substrate: Asp-122, Ser-160, Asn-164, Lys-167, and His-195. Residues His-195 and His-197 each coordinate Mn(2+).

This sequence belongs to the LpxH family. Mn(2+) serves as cofactor.

The protein resides in the cell inner membrane. It catalyses the reaction UDP-2-N,3-O-bis[(3R)-3-hydroxytetradecanoyl]-alpha-D-glucosamine + H2O = 2-N,3-O-bis[(3R)-3-hydroxytetradecanoyl]-alpha-D-glucosaminyl 1-phosphate + UMP + 2 H(+). Its pathway is glycolipid biosynthesis; lipid IV(A) biosynthesis; lipid IV(A) from (3R)-3-hydroxytetradecanoyl-[acyl-carrier-protein] and UDP-N-acetyl-alpha-D-glucosamine: step 4/6. Functionally, hydrolyzes the pyrophosphate bond of UDP-2,3-diacylglucosamine to yield 2,3-diacylglucosamine 1-phosphate (lipid X) and UMP by catalyzing the attack of water at the alpha-P atom. Involved in the biosynthesis of lipid A, a phosphorylated glycolipid that anchors the lipopolysaccharide to the outer membrane of the cell. The protein is UDP-2,3-diacylglucosamine hydrolase of Photorhabdus laumondii subsp. laumondii (strain DSM 15139 / CIP 105565 / TT01) (Photorhabdus luminescens subsp. laumondii).